We begin with the raw amino-acid sequence, 403 residues long: Tripartite motif-containing protein 59 (403 aa).

The RING-type zinc-finger motif lies at 10 to 60; it reads CPICYSIFEDPRVLPCSHTFCRNCLENVLQASGNFYIWRPLRIPLKCPNCR. The B box-type zinc finger occupies 92 to 134; the sequence is PDVVTCPEHYRQPLNVYCLLDKKLVCGHCLTIGQHHGHPIDDL. Zn(2+) contacts are provided by C97, H100, C120, and H126. Positions 163-246 form a coiled coil; sequence LIEKLEEQKC…TITTSLQDES (84 aa). A helical membrane pass occupies residues 329-349; it reads ILNIAIVSLISVILMLILLFN.

It belongs to the TRIM/RBCC family. In terms of assembly, interacts with ECSIT. In terms of tissue distribution, moderately expressed in the spleen, brain and heart and very highly expressed in the testis.

It is found in the endoplasmic reticulum membrane. The enzyme catalyses S-ubiquitinyl-[E2 ubiquitin-conjugating enzyme]-L-cysteine + [acceptor protein]-L-lysine = [E2 ubiquitin-conjugating enzyme]-L-cysteine + N(6)-ubiquitinyl-[acceptor protein]-L-lysine.. Its pathway is protein modification; protein ubiquitination. E3 ubiquitin ligase involved in different processes such as development and immune response. Serves as a negative regulator for innate immune signaling pathways by suppressing RLR-induced activation of IRF3/7 and NF-kappa-B via interaction with adapter ECSIT. Regulates autophagy through modulating both the transcription and the ubiquitination of BECN1. On the one hand, regulates the transcription of BECN1 through negatively modulating the NF-kappa-B pathway. On the other hand, regulates TRAF6-mediated 'Lys-63'-linked ubiquitination of BECN1, thus affecting the formation of the BECN1-PIK3C3 complex. In addition, mediates 'Lys-48'-linked ubiquitination of TRAF6 and thereby promotes TRAF6 proteasomal degradation. Also acts as a critical regulator for early embryo development from blastocyst stage to gastrula through modulating F-actin assembly and WASH1 'Lys-63'-linked ubiquitination. The chain is Tripartite motif-containing protein 59 (Trim59) from Mus musculus (Mouse).